The primary structure comprises 506 residues: Allantoinase (506 aa).

Residues histidine 105, histidine 107, lysine 195, histidine 231, histidine 292, and aspartate 366 each coordinate Zn(2+). Lysine 195 carries the post-translational modification N6-carboxylysine.

Belongs to the metallo-dependent hydrolases superfamily. Allantoinase family. In terms of assembly, homotetramer. The cofactor is Zn(2+). Carboxylation allows a single lysine to coordinate two zinc ions.

The catalysed reaction is (S)-allantoin + H2O = allantoate + H(+). Its pathway is nitrogen metabolism; (S)-allantoin degradation; allantoate from (S)-allantoin: step 1/1. Its function is as follows. Catalyzes the conversion of allantoin (5-ureidohydantoin) to allantoate by hydrolytic cleavage of the five-member hydantoin ring. Catalyzes the first step of the ureide allantoin degradation followed by the sequential activity of AAH, UGLYAH and UAH which allows a complete purine breakdown without the intermediate generation of urea. In Arabidopsis thaliana (Mouse-ear cress), this protein is Allantoinase (ALN).